A 295-amino-acid chain; its full sequence is Indole-3-glycerol phosphate synthase (295 aa).

The protein belongs to the TrpC family.

The catalysed reaction is 1-(2-carboxyphenylamino)-1-deoxy-D-ribulose 5-phosphate + H(+) = (1S,2R)-1-C-(indol-3-yl)glycerol 3-phosphate + CO2 + H2O. The protein operates within amino-acid biosynthesis; L-tryptophan biosynthesis; L-tryptophan from chorismate: step 4/5. In Prochlorococcus marinus (strain NATL2A), this protein is Indole-3-glycerol phosphate synthase.